A 299-amino-acid chain; its full sequence is tRNA dimethylallyltransferase (299 aa).

13–20 (GPTASGKT) contacts ATP. Substrate is bound at residue 15 to 20 (TASGKT). Residues 38–41 (DSRQ) form an interaction with substrate tRNA region.

This sequence belongs to the IPP transferase family. Monomer. Requires Mg(2+) as cofactor.

The catalysed reaction is adenosine(37) in tRNA + dimethylallyl diphosphate = N(6)-dimethylallyladenosine(37) in tRNA + diphosphate. Its function is as follows. Catalyzes the transfer of a dimethylallyl group onto the adenine at position 37 in tRNAs that read codons beginning with uridine, leading to the formation of N6-(dimethylallyl)adenosine (i(6)A). This is tRNA dimethylallyltransferase from Prochlorococcus marinus (strain MIT 9301).